The primary structure comprises 367 residues: GTP cyclohydrolase FolE2 (367 aa).

This sequence belongs to the GTP cyclohydrolase IV family.

It catalyses the reaction GTP + H2O = 7,8-dihydroneopterin 3'-triphosphate + formate + H(+). Its pathway is cofactor biosynthesis; 7,8-dihydroneopterin triphosphate biosynthesis; 7,8-dihydroneopterin triphosphate from GTP: step 1/1. Functionally, converts GTP to 7,8-dihydroneopterin triphosphate. The protein is GTP cyclohydrolase FolE2 of Ruegeria pomeroyi (strain ATCC 700808 / DSM 15171 / DSS-3) (Silicibacter pomeroyi).